The primary structure comprises 396 residues: Elongation factor Tu (396 aa).

The tr-type G domain maps to 10 to 206; the sequence is KPHVNIGTIG…AVDEYIPTPQ (197 aa). The interval 19–26 is G1; the sequence is GHVDHGKT. 19-26 lines the GTP pocket; the sequence is GHVDHGKT. T26 is a Mg(2+) binding site. The interval 60–64 is G2; it reads GITIS. Residues 81-84 are G3; sequence DCPG. Residues 81–85 and 136–139 each bind GTP; these read DCPGH and NKVD. Positions 136-139 are G4; that stretch reads NKVD. The G5 stretch occupies residues 174–176; sequence SAL.

It belongs to the TRAFAC class translation factor GTPase superfamily. Classic translation factor GTPase family. EF-Tu/EF-1A subfamily. As to quaternary structure, monomer.

The protein localises to the cytoplasm. The enzyme catalyses GTP + H2O = GDP + phosphate + H(+). Functionally, GTP hydrolase that promotes the GTP-dependent binding of aminoacyl-tRNA to the A-site of ribosomes during protein biosynthesis. The polypeptide is Elongation factor Tu (Stigmatella aurantiaca).